The sequence spans 212 residues: Protein Nef (212 aa).

A lipid anchor (N-myristoyl glycine; by host) is attached at Gly-2. Ser-6 carries the post-translational modification Phosphoserine; by host. The tract at residues Glu-67–Glu-71 is acidic; interacts with host PACS1 and PACS2; stabilizes the interaction of NEF/MHC-I with host AP1M1; necessary for MHC-I internalization. The interval Pro-75 to Pro-84 is SH3-binding; interaction with Src family tyrosine kinases. The PxxP; stabilizes the interaction of NEF/MHC-I with host AP1M1; necessary for MHC-I internalization motif lies at Pro-78 to Pro-81. The interval Asp-114–Trp-130 is mediates dimerization, Nef-PTE1 interaction. The binding to ATP6V1H stretch occupies residues Leu-154 to Val-186. Positions Leu-170 to Leu-171 match the Dileucine internalization motif; necessary for CD4 internalization motif. A Diacidic; necessary for CD4 internalization motif is present at residues Asp-180–Asp-181.

Belongs to the lentivirus primate group Nef protein family. Monomer; cytosolic form. Homodimer; membrane bound form. Interacts with Nef associated p21-activated kinase (PAK2); this interaction activates PAK2. Associates with the Nef-MHC-I-AP1 complex; this complex is required for MHC-I internalization. Interacts (via C-terminus) with host PI3-kinase. Interacts with host PACS1; this interaction seems to be weak. Interacts with host PACS2. Interacts with host LCK and MAPK3; these interactions inhibit the kinase activity of the latter. Interacts with host ATP6V1H; this interaction may play a role in CD4 endocytosis. Associates with the CD4-Nef-AP2 complex; this complex is required for CD4 internalization. Interacts with host AP2 subunit alpha and AP2 subunit sigma2. Interacts with TCR-zeta chain; this interaction up-regulates the Fas ligand (FasL) surface expression. Interacts with host HCK, LYN, and SRC; these interactions activate the Src family kinases. Interacts with MAP3K5; this interaction inhibits the Fas and TNFR-mediated death signals. Interacts with beta-COP and PTE1. Interacts with human RACK1; this increases Nef phosphorylation by PKC. Interacts with TP53; this interaction decreases the half-life of TP53, protecting the infected cell against p53-mediated apoptosis. The virion-associated Nef proteins are cleaved by the viral protease to release the soluble C-terminal core protein. Nef is probably cleaved concomitantly with viral structural proteins on maturation of virus particles. Post-translationally, myristoylated. In terms of processing, phosphorylated on serine residues, probably by host PKCdelta and theta.

It localises to the host cell membrane. Its subcellular location is the virion. It is found in the secreted. The protein localises to the host Golgi apparatus membrane. Its function is as follows. Factor of infectivity and pathogenicity, required for optimal virus replication. Alters numerous pathways of T-lymphocyte function and down-regulates immunity surface molecules in order to evade host defense and increase viral infectivity. Alters the functionality of other immunity cells, like dendritic cells, monocytes/macrophages and NK cells. In terms of biological role, in infected CD4(+) T-lymphocytes, down-regulates the surface MHC-I, mature MHC-II, CD4, CD28, CCR5 and CXCR4 molecules. Mediates internalization and degradation of host CD4 through the interaction of with the cytoplasmic tail of CD4, the recruitment of AP-2 (clathrin adapter protein complex 2), internalization through clathrin coated pits, and subsequent transport to endosomes and lysosomes for degradation. Diverts host MHC-I molecules to the trans-Golgi network-associated endosomal compartments by an endocytic pathway to finally target them for degradation. MHC-I down-regulation may involve AP-1 (clathrin adapter protein complex 1) or possibly Src family kinase-ZAP70/Syk-PI3K cascade recruited by PACS2. In consequence infected cells are masked for immune recognition by cytotoxic T-lymphocytes. Decreasing the number of immune receptors also prevents reinfection by more HIV particles (superinfection). Down-regulates host SERINC3 and SERINC5 thereby excluding these proteins from the viral particles. Virion infectivity is drastically higher when SERINC3 or SERINC5 are excluded from the viral envelope, because these host antiviral proteins impair the membrane fusion event necessary for subsequent virion penetration. Functionally, bypasses host T-cell signaling by inducing a transcriptional program nearly identical to that of anti-CD3 cell activation. Interaction with TCR-zeta chain up-regulates the Fas ligand (FasL). Increasing surface FasL molecules and decreasing surface MHC-I molecules on infected CD4(+) cells send attacking cytotoxic CD8+ T-lymphocytes into apoptosis. Plays a role in optimizing the host cell environment for viral replication without causing cell death by apoptosis. Protects the infected cells from apoptosis in order to keep them alive until the next virus generation is ready to strike. Inhibits the Fas and TNFR-mediated death signals by blocking MAP3K5/ASK1. Decreases the half-life of TP53, protecting the infected cell against p53-mediated apoptosis. Inhibits the apoptotic signals regulated by the Bcl-2 family proteins through the formation of a Nef/PI3-kinase/PAK2 complex that leads to activation of PAK2 and induces phosphorylation of host BAD. Its function is as follows. Extracellular Nef protein targets CD4(+) T-lymphocytes for apoptosis by interacting with CXCR4 surface receptors. The sequence is that of Protein Nef from Human immunodeficiency virus type 1 group N (isolate YBF30) (HIV-1).